A 194-amino-acid polypeptide reads, in one-letter code: Large ribosomal subunit protein eL15 (194 aa).

The disordered stretch occupies residues 162-194 (LTSAGRKSRGLRNKGKGAEKVRPSVRANKGKTK). Residues 167–176 (RKSRGLRNKG) show a composition bias toward basic residues.

The protein belongs to the eukaryotic ribosomal protein eL15 family.

This is Large ribosomal subunit protein eL15 from Thermococcus onnurineus (strain NA1).